The following is a 124-amino-acid chain: Fluoride-specific ion channel FluC (124 aa).

Helical transmembrane passes span 4–24 (LLLV…ISIF), 35–55 (FGTL…YALG), 60–80 (ISPE…TTFS), and 102–122 (VVLN…LVFS). Na(+) contacts are provided by G74 and T77.

Belongs to the fluoride channel Fluc/FEX (TC 1.A.43) family.

The protein resides in the cell inner membrane. The enzyme catalyses fluoride(in) = fluoride(out). Na(+) is not transported, but it plays an essential structural role and its presence is essential for fluoride channel function. Functionally, fluoride-specific ion channel. Important for reducing fluoride concentration in the cell, thus reducing its toxicity. The polypeptide is Fluoride-specific ion channel FluC (Shewanella baltica (strain OS185)).